A 503-amino-acid chain; its full sequence is NAD-dependent protein deacetylase HST1 (503 aa).

Residues 183 to 468 form the Deacetylase sirtuin-type domain; the sequence is RLPNFNTIDH…SLVAKKCHWD (286 aa). NAD(+) is bound by residues 208–227 and 290–293; these read GAGV…EGFY and QNID. His310 serves as the catalytic Proton acceptor. 4 residues coordinate Zn(2+): Cys318, Cys321, Cys342, and Cys345. Residues 412–414, 437–439, and Cys454 contribute to the NAD(+) site; these read GTS and NRD.

It belongs to the sirtuin family. Class I subfamily. As to quaternary structure, identified in the Set3C complex with HOS2, SIF2, SNT1, CPR1, HOS4/YIL112W and SET3. Its presence is however not essential for meiotic repression by the Set3C complex. Interacts with SUM1 and RFM1. The interaction with SUM1 is mediated by RFM1. Zn(2+) is required as a cofactor.

It is found in the nucleus. The enzyme catalyses N(6)-acetyl-L-lysyl-[protein] + NAD(+) + H2O = 2''-O-acetyl-ADP-D-ribose + nicotinamide + L-lysyl-[protein]. In terms of biological role, NAD-dependent histone deacetylase involved in telomeric silencing. Histone deacetylase proteins act via the formation of large multiprotein complexes that are responsible for the deacetylation of lysine residues on the N-terminal part of the core histones (H2A, H2B, H3 and H4). Histone deacetylation gives a tag for epigenetic repression and plays an important role in transcriptional regulation, cell cycle progression and developmental events. Restores silencing at HMR in SIR2 mutants when overexpressed. Required to repress middle sporulation genes during vegetative growth. Acts as a sensor of NAD(+) levels and regulator of NAD(+) biosynthesis. Regulates the gene expression of de novo NAD(+) biosynthesis genes. The sequence is that of NAD-dependent protein deacetylase HST1 (HST1) from Saccharomyces cerevisiae (strain ATCC 204508 / S288c) (Baker's yeast).